We begin with the raw amino-acid sequence, 193 residues long: Guanylate kinase (193 aa).

The 181-residue stretch at 8-188 folds into the Guanylate kinase-like domain; the sequence is GRLVVLVGPS…ACEQLVSLFV (181 aa). Position 15–22 (15–22) interacts with ATP; the sequence is GPSAVGKS.

It belongs to the guanylate kinase family.

It localises to the cytoplasm. It catalyses the reaction GMP + ATP = GDP + ADP. Its function is as follows. Essential for recycling GMP and indirectly, cGMP. This Nocardia farcinica (strain IFM 10152) protein is Guanylate kinase.